The chain runs to 142 residues: Large ribosomal subunit protein uL13 (142 aa).

This sequence belongs to the universal ribosomal protein uL13 family. Part of the 50S ribosomal subunit.

In terms of biological role, this protein is one of the early assembly proteins of the 50S ribosomal subunit, although it is not seen to bind rRNA by itself. It is important during the early stages of 50S assembly. The sequence is that of Large ribosomal subunit protein uL13 from Maridesulfovibrio salexigens (strain ATCC 14822 / DSM 2638 / NCIMB 8403 / VKM B-1763) (Desulfovibrio salexigens).